A 590-amino-acid polypeptide reads, in one-letter code: MQCEEAHVLVLYTGGTIGMKYIDGVYQPEANYLLHAIRDLSLLNDDDYVSTYYSDAEIRPYCLPPLQHSKKRVVYWMIEYDPLLDSSDMTFDDWIHIGKDIQRAYDQYVGFVILHGTDTLAYTACALSFMLENVRKPIVITGAQIPVCEVRSDGRENLIGALIIAANYDIPEVTVYFNNKLFRGNRTVKIDNRSMDAFESPNMLPIAYMDVDIKVNYDSIFRSPSMAPFVVHDQLCRNVGLLRIFPSMSIENVRASLQAPIEGVVLQTFGAGNMPSHRTDIIDELKKAVDRGCIIINCSQCVRGQVDIHYLTGKVLYDMGIIPGSDMTAEAALTKLSYVLSKDCWELVEKKAMMVKNIRGELTVAKAEPLKDLEIVSQMARFLHLSSSHEMKLLCHAIFPQLLCYAASNGDIEMLKALHENGVDLSVVDYNGRNALHVAASAGHVGAVKYLLTQGVSFHLRDQWDENALVSAVKMKNKILIETLRSAGALLSINSRRLGVELCLCASYGDTETLNSWLAAGADINQQDYNGETALHIAVKSRNKQLVHYLLDRDADPYKIDDFNLTPLRHAKKLNLQDLVIRMKKMKKVQ.

An Asparaginase/glutaminase domain is found at 6–357; the sequence is AHVLVLYTGG…VEKKAMMVKN (352 aa). The active-site O-isoaspartyl threonine intermediate is the Thr16. An asparaginase region spans residues 44 to 351; it reads NDDDYVSTYY…KDCWELVEKK (308 aa). Substrate-binding positions include 85-87 and 117-118; these read DSS and TD. ANK repeat units lie at residues 398–427, 431–460, 497–526, and 530–559; these read IFPQ…DLSV, NGRN…SFHL, RLGV…DINQ, and NGET…DPYK.

In the N-terminal section; belongs to the asparaginase 1 family. In terms of tissue distribution, may be present in the larval cuticle.

It catalyses the reaction L-asparagine + H2O = L-aspartate + NH4(+). The chain is L-asparaginase from Dirofilaria immitis (Canine heartworm).